Here is a 155-residue protein sequence, read N- to C-terminus: 2-C-methyl-D-erythritol 2,4-cyclodiphosphate synthase (155 aa).

A divalent metal cation is bound by residues aspartate 8 and histidine 10. 4-CDP-2-C-methyl-D-erythritol 2-phosphate-binding positions include 8–10 and 34–35; these read DVH and HS. Histidine 42 contacts a divalent metal cation. Residues 56–58, 61–65, 100–106, 132–135, phenylalanine 139, and lysine 142 contribute to the 4-CDP-2-C-methyl-D-erythritol 2-phosphate site; these read DIG, FPDSD, AQKPKML, and TTEE.

Belongs to the IspF family. Homotrimer. A divalent metal cation is required as a cofactor.

The enzyme catalyses 4-CDP-2-C-methyl-D-erythritol 2-phosphate = 2-C-methyl-D-erythritol 2,4-cyclic diphosphate + CMP. The protein operates within isoprenoid biosynthesis; isopentenyl diphosphate biosynthesis via DXP pathway; isopentenyl diphosphate from 1-deoxy-D-xylulose 5-phosphate: step 4/6. Involved in the biosynthesis of isopentenyl diphosphate (IPP) and dimethylallyl diphosphate (DMAPP), two major building blocks of isoprenoid compounds. Catalyzes the conversion of 4-diphosphocytidyl-2-C-methyl-D-erythritol 2-phosphate (CDP-ME2P) to 2-C-methyl-D-erythritol 2,4-cyclodiphosphate (ME-CPP) with a corresponding release of cytidine 5-monophosphate (CMP). This is 2-C-methyl-D-erythritol 2,4-cyclodiphosphate synthase from Clostridium botulinum (strain 657 / Type Ba4).